The chain runs to 22 residues: Magnificalysin II (22 aa).

Residues Ala3–Ala12 form a plays an important role in the hemolytic activity region. The segment at Gly11–Val22 is N-terminal region.

This sequence belongs to the actinoporin family. Sea anemone subfamily. Octamer or nonamer in membranes. Monomer in the soluble state.

The protein resides in the secreted. It is found in the nematocyst. Its subcellular location is the target cell membrane. Functionally, pore-forming protein that forms cations-selective hydrophilic pores of around 1 nm and causes cytolysis. Pore formation is a multi-step process that involves specific recognition of membrane sphingomyelin (but neither cholesterol nor phosphatidylcholine) using aromatic rich region and adjacent phosphocholine (POC) binding site, firm binding to the membrane (mainly driven by hydrophobic interactions) accompanied by the transfer of the N-terminal region to the lipid-water interface and finally pore formation after oligomerization of monomers. The protein is Magnificalysin II of Heteractis magnifica (Magnificent sea anemone).